Consider the following 184-residue polypeptide: Interferon alpha-2 (184 aa).

Positions 1 to 23 are cleaved as a signal peptide; that stretch reads MALPFSLLMALVVLSCHSSCSLG. 2 disulfides stabilise this stretch: Cys24/Cys122 and Cys52/Cys162.

This sequence belongs to the alpha/beta interferon family. In terms of assembly, interacts with IFNAR2.

The protein resides in the secreted. Functionally, produced by macrophages, IFN-alpha have antiviral activities. The chain is Interferon alpha-2 from Equus caballus (Horse).